The sequence spans 132 residues: L-ectoine synthase (132 aa).

This sequence belongs to the ectoine synthase family.

The enzyme catalyses (2S)-4-acetamido-2-aminobutanoate = L-ectoine + H2O. It functions in the pathway amine and polyamine biosynthesis; ectoine biosynthesis; L-ectoine from L-aspartate 4-semialdehyde: step 3/3. Catalyzes the circularization of gamma-N-acetyl-alpha,gamma-diaminobutyric acid (ADABA) to ectoine (1,4,5,6-tetrahydro-2-methyl-4-pyrimidine carboxylic acid), which is an excellent osmoprotectant. The polypeptide is L-ectoine synthase (Bordetella avium (strain 197N)).